The sequence spans 77 residues: Metallothionein-like protein 2B (77 aa).

It belongs to the metallothionein superfamily. Type 15 family. Expressed in vascular tissues of all organs. Expressed in root and leaf phloem, pollen and root hairs.

Its function is as follows. Metallothioneins have a high content of cysteine residues that bind various heavy metals. Functions as a metal chelator of copper (Cu) and zinc (Zn). Functions cooperatively with the phytochelatin synthase PCS1 to protect plants from Cu and cadmium toxicity. Plays a role in Cu homeostasis, specifically in the remobilization of Cu from senescing leaves. The mobilization of Cu from internal sources is important for seed development. The chain is Metallothionein-like protein 2B (MT2B) from Arabidopsis thaliana (Mouse-ear cress).